Here is a 741-residue protein sequence, read N- to C-terminus: Catalase-peroxidase 2 (741 aa).

The first 28 residues, 1-28, serve as a signal peptide directing secretion; that stretch reads MQRNRIAKSVLAALAVIAMSAGSISARA. The segment at residues 107-228 is a cross-link (tryptophyl-tyrosyl-methioninium (Trp-Tyr) (with M-254)); it reads WHGAGTYRTY…LAATQMGLIY (122 aa). Catalysis depends on His-108, which acts as the Proton acceptor. The segment at residues 228–254 is a cross-link (tryptophyl-tyrosyl-methioninium (Tyr-Met) (with W-107)); that stretch reads YVNPEGPNGNPDPVAAAQDIREAFGRM. Heme b is bound at residue His-269.

It belongs to the peroxidase family. Peroxidase/catalase subfamily. As to quaternary structure, homodimer or homotetramer. It depends on heme b as a cofactor. Post-translationally, formation of the three residue Trp-Tyr-Met cross-link is important for the catalase, but not the peroxidase activity of the enzyme.

The catalysed reaction is H2O2 + AH2 = A + 2 H2O. The enzyme catalyses 2 H2O2 = O2 + 2 H2O. Functionally, bifunctional enzyme with both catalase and broad-spectrum peroxidase activity. The protein is Catalase-peroxidase 2 of Burkholderia vietnamiensis (strain G4 / LMG 22486) (Burkholderia cepacia (strain R1808)).